A 62-amino-acid chain; its full sequence is Large ribosomal subunit protein bL28 (62 aa).

The protein belongs to the bacterial ribosomal protein bL28 family.

In Koribacter versatilis (strain Ellin345), this protein is Large ribosomal subunit protein bL28.